The following is a 371-amino-acid chain: tRNA-specific 2-thiouridylase MnmA (371 aa).

ATP-binding positions include 16–23 (GMSGGVDS) and Met-42. The segment at 102–104 (NPD) is interaction with target base in tRNA. The Nucleophile role is filled by Cys-107. An intrachain disulfide couples Cys-107 to Cys-204. Gly-132 lines the ATP pocket. Residues 154-156 (KDQ) form an interaction with tRNA region. Catalysis depends on Cys-204, which acts as the Cysteine persulfide intermediate. The tract at residues 316–317 (RY) is interaction with tRNA.

The protein belongs to the MnmA/TRMU family.

It localises to the cytoplasm. The catalysed reaction is S-sulfanyl-L-cysteinyl-[protein] + uridine(34) in tRNA + AH2 + ATP = 2-thiouridine(34) in tRNA + L-cysteinyl-[protein] + A + AMP + diphosphate + H(+). In terms of biological role, catalyzes the 2-thiolation of uridine at the wobble position (U34) of tRNA, leading to the formation of s(2)U34. In Shewanella pealeana (strain ATCC 700345 / ANG-SQ1), this protein is tRNA-specific 2-thiouridylase MnmA.